The chain runs to 510 residues: Serine carboxypeptidase-like 48 (510 aa).

Residues 1–25 form the signal peptide; sequence MDSKTTFLTFLLCIFIFSHFSPSTS. Cystine bridges form between Cys141–Cys383, Cys309–Cys326, and Cys349–Cys354. 2 N-linked (GlcNAc...) asparagine glycosylation sites follow: Asn158 and Asn159. Ser231 is a catalytic residue. Active-site residues include Asp421 and His478.

It belongs to the peptidase S10 family. As to expression, ubiquitous.

The protein resides in the secreted. Functionally, probable carboxypeptidase. The sequence is that of Serine carboxypeptidase-like 48 (SCPL48) from Arabidopsis thaliana (Mouse-ear cress).